We begin with the raw amino-acid sequence, 982 residues long: MVFLKRFRAYGFKSYADEITIDFTHSMTGIVGPNGSGKSNVVDALKWVLGERSMKHLRSKSGDDMIFFGSKDKPASKLAEIELTFDNSNRLLHDSRKEISVMRRVYRGSGQSEYFINSNPATLKEISGIFADIGLEKGSLGIISQGSVSWFVEAKPEERRKIFEDASGIGRYTKRKEEVVNQLNRTLINLKQVSVVLNELKKDLKKLTLQAEKAQQFIRVKNELKELELAVLVGEYLQAQTELDKFNFQINSSEHDFKIHEPQLELLEEQIVIFNSRFHSADMQSNELQKELQDIYQKINELEQRKVIIDVQLRQGFSQKDEKQKAAALKKLILVDQTQLDGFENQLSNSKTTITDLEKLINEQKSLVDQIKLQIEKNTADLIYQRSLKTIIELQTNELKKTNNANILVKNANALTGILNTLGTFLKFDKQYEKAILKALGKSIGYLVVNNNNAAIQAIDFLVKNEIGKVTFLPLDDVASDTKITNEHMEILKQLDGFLGVCSDHVKCDPLFQPVVNTLLAQVIIAKDLNSAINLSNYTYKLYRIVTLDGETVYAGGIINGGFEKTNLSDGYLSSASLDNEQNINKLENNERELKKELTELEVKLDEMNRKLKYEELLQAKFIERIVQIKKIILELKMEYEQLTNTTFDGKKAVASEAELIHSLNSAWAKRDEINSKLKLNQELKLQLAKTIKQSEEKIVDLRALLDEQRAKLVSAREGKIRFENTIQNITEKINSVYKMTMEFAIANHNKPVKLSSMQAHNKIAKLQNQLNEMGVINMESIAEISEKQKRFDDINAEYESAQQAVENLQKAITEIDEIASNEFDQLIQKLNQELPKTFKYLFGGGSCQIRYTDPSNVLVSGIDVFANPPGKNIANLMLLSGGEKTLVALSVLFSILKVSAFPLVILDEAESALDPANVERFANIIKTASKNTQFLIITHRQGTMMKCDMLLGAAMQTKGVTKTFAVELENAEKYVSENDSN.

33 to 40 lines the ATP pocket; sequence PNGSGKSN. Coiled-coil stretches lie at residues 171–231, 280–310, and 337–377; these read RYTK…ELAV, SADM…VIID, and QTQL…QIEK. One can recognise an SMC hinge domain in the interval 416–535; it reads TGILNTLGTF…AKDLNSAINL (120 aa). Coiled-coil stretches lie at residues 575-718 and 753-822; these read SASL…SARE and VKLS…IASN.

This sequence belongs to the SMC family. In terms of assembly, homodimer.

The protein localises to the cytoplasm. Required for chromosome condensation and partitioning. This is Chromosome partition protein Smc from Mycoplasma genitalium (strain ATCC 33530 / DSM 19775 / NCTC 10195 / G37) (Mycoplasmoides genitalium).